The primary structure comprises 290 residues: Ribosome-inactivating protein bryodin I (290 aa).

Positions 1–23 (MIKLLVLWLLILTIFLKSPTVEG) are cleaved as a signal peptide. Catalysis depends on residues Glu-183 and Glu-212. N-linked (GlcNAc...) asparagine glycans are attached at residues Asn-214 and Asn-250. Residues 271-290 (AIGEDISMTLIGFEHGLYGI) constitute a propeptide, removed in mature form.

The protein belongs to the ribosome-inactivating protein family. Type 1 RIP subfamily. Post-translationally, appears to undergo proteolytic cleavage in the C-terminal to produce a shorter protein.

It catalyses the reaction Endohydrolysis of the N-glycosidic bond at one specific adenosine on the 28S rRNA.. Its function is as follows. Ribosome-inactivating protein of type 1, inhibits protein synthesis in animal cells. The chain is Ribosome-inactivating protein bryodin I from Bryonia dioica (Red bryony).